A 103-amino-acid chain; its full sequence is Cystatin-A (103 aa).

N-acetylmethionine is present on M1. The Secondary area of contact motif lies at 52 to 56 (QVVAG).

This sequence belongs to the cystatin family.

It localises to the cytoplasm. This is an intracellular thiol proteinase inhibitor. The protein is Cystatin-A (Csta) of Rattus norvegicus (Rat).